Reading from the N-terminus, the 403-residue chain is MALTTTGTEQHDLFSGTFWQNPHPAYAALRAEDPVRKLALPDGPVWLLTRYADVREAFVDPRLSKDWRHTLPEDQRADMPATPTPMMILMDPPDHTRLRKLVGRSFTVRRMNELEPRITEIADGLLAGLPTDGPVDLMREYAFQIPVQVICELLGVPAEDRDDFSAWSSVLVDDSPADDKNAAMGKLHGYLSDLLERKRTEPDDALLSSLLAVSDEDGDRLSQEELVAMAMLLLIAGHETTVNLIGNGVLALLTHPDQRKLLAEDPSLISSAVEEFLRFDSPVSQAPIRFTAEDVTYSGVTIPAGEMVMLGLAAANRDADWMPEPDRLDITRDASGGVFFGHGIHFCLGAQLARLEGRVAIGRLFADRPELALAVGLDELVYRESTLVRGLSRMPVTMGPRSA.

Residue Cys347 coordinates heme.

The protein belongs to the cytochrome P450 family. Heme is required as a cofactor.

It localises to the cytoplasm. It carries out the reaction 5beta-cholestane-3alpha,7alpha,12alpha-triol + 6 reduced [adrenodoxin] + 3 O2 + 5 H(+) = (25R)-3alpha,7alpha,12alpha-trihydroxy-5beta-cholestan-26-oate + 6 oxidized [adrenodoxin] + 4 H2O. Activated by partially methylated beta-cyclodextrin. In terms of biological role, hydroxylates vitamin D(3) into 25-hydroxyvitamin D(3) and 1-alpha,25-dihydroxyvitamin D(3), its physiologically active forms. It first hydroxylates the C-25 position of vitamin D(3) to form 25-hydroxyvitamin D(3), then subsequently hydroxylates the C-1-alpha position to form 1-alpha,25-dihydroxyvitamin D(3). Also displays 25-hydroxylase activity on vitamin D(2) and 7-dehydrocholesterol. May play a role in the biosynthesis of steroid metabolic intermediates. This chain is Vitamin D(3) 25-hydroxylase, found in Pseudonocardia autotrophica (Amycolata autotrophica).